The chain runs to 382 residues: Pyrimidine monooxygenase RutA (382 aa).

Residues 68–69 (IK), asparagine 134, glutamate 143, 159–160 (RY), and serine 209 each bind FMN.

The protein belongs to the NtaA/SnaA/DszA monooxygenase family. RutA subfamily.

It carries out the reaction uracil + FMNH2 + NADH + O2 = (Z)-3-ureidoacrylate + FMN + NAD(+) + H2O + H(+). The enzyme catalyses thymine + FMNH2 + NADH + O2 = (Z)-2-methylureidoacrylate + FMN + NAD(+) + H2O + H(+). Functionally, catalyzes the pyrimidine ring opening between N-3 and C-4 by an unusual flavin hydroperoxide-catalyzed mechanism, adding oxygen atoms in the process to yield ureidoacrylate peracid, that immediately reacts with FMN forming ureidoacrylate and FMN-N(5)-oxide. The FMN-N(5)-oxide reacts spontaneously with NADH to produce FMN. Requires the flavin reductase RutF to regenerate FMN in vivo. The polypeptide is Pyrimidine monooxygenase RutA (Escherichia coli (strain SE11)).